Reading from the N-terminus, the 362-residue chain is 3-dehydroquinate synthase (362 aa).

Residues 70–75 (DGEKYK), 104–108 (GVIGD), 128–129 (TT), lysine 141, and lysine 150 contribute to the NAD(+) site. Positions 183, 246, and 263 each coordinate Zn(2+).

Belongs to the sugar phosphate cyclases superfamily. Dehydroquinate synthase family. Co(2+) serves as cofactor. It depends on Zn(2+) as a cofactor. Requires NAD(+) as cofactor.

Its subcellular location is the cytoplasm. The catalysed reaction is 7-phospho-2-dehydro-3-deoxy-D-arabino-heptonate = 3-dehydroquinate + phosphate. It functions in the pathway metabolic intermediate biosynthesis; chorismate biosynthesis; chorismate from D-erythrose 4-phosphate and phosphoenolpyruvate: step 2/7. Its function is as follows. Catalyzes the conversion of 3-deoxy-D-arabino-heptulosonate 7-phosphate (DAHP) to dehydroquinate (DHQ). This chain is 3-dehydroquinate synthase, found in Acinetobacter baylyi (strain ATCC 33305 / BD413 / ADP1).